Here is a 211-residue protein sequence, read N- to C-terminus: Redox-sensing transcriptional repressor Rex (211 aa).

Residues 17–56 constitute a DNA-binding region (H-T-H motif); the sequence is LYYRFIQNFAQEGMERISSKELSEAMKIDSATIRRDFSYF. Residue 91 to 96 participates in NAD(+) binding; that stretch reads GVGNLG.

The protein belongs to the transcriptional regulatory Rex family. Homodimer.

It localises to the cytoplasm. Its function is as follows. Modulates transcription in response to changes in cellular NADH/NAD(+) redox state. The chain is Redox-sensing transcriptional repressor Rex from Lysinibacillus sphaericus (strain C3-41).